A 79-amino-acid chain; its full sequence is U16-theraphotoxin-Cg1a (79 aa).

An N-terminal signal peptide occupies residues 1 to 19 (MRALLIIAGLALFLVVCNA). The propeptide occupies 20–44 (SQVNEQRKLNEMLSVMFAVEEPQER). 3 disulfide bridges follow: cysteine 47–cysteine 62, cysteine 54–cysteine 67, and cysteine 61–cysteine 74.

This sequence belongs to the neurotoxin 10 (Hwtx-1) family. 34 (Jztx-26) subfamily. In terms of tissue distribution, expressed by the venom gland.

The protein resides in the secreted. In terms of biological role, probable ion channel inhibitor. The protein is U16-theraphotoxin-Cg1a of Chilobrachys guangxiensis (Chinese earth tiger tarantula).